Reading from the N-terminus, the 291-residue chain is ATP synthase gamma chain (291 aa).

This sequence belongs to the ATPase gamma chain family. In terms of assembly, F-type ATPases have 2 components, CF(1) - the catalytic core - and CF(0) - the membrane proton channel. CF(1) has five subunits: alpha(3), beta(3), gamma(1), delta(1), epsilon(1). CF(0) has three main subunits: a, b and c.

The protein localises to the cell inner membrane. In terms of biological role, produces ATP from ADP in the presence of a proton gradient across the membrane. The gamma chain is believed to be important in regulating ATPase activity and the flow of protons through the CF(0) complex. In Methylibium petroleiphilum (strain ATCC BAA-1232 / LMG 22953 / PM1), this protein is ATP synthase gamma chain.